The sequence spans 426 residues: Enolase (426 aa).

(2R)-2-phosphoglycerate is bound at residue Gln163. Glu205 serves as the catalytic Proton donor. Asp242, Glu283, and Asp310 together coordinate Mg(2+). (2R)-2-phosphoglycerate is bound by residues Lys335, Arg364, Ser365, and Lys386. The Proton acceptor role is filled by Lys335.

This sequence belongs to the enolase family. Requires Mg(2+) as cofactor.

It is found in the cytoplasm. Its subcellular location is the secreted. The protein localises to the cell surface. It catalyses the reaction (2R)-2-phosphoglycerate = phosphoenolpyruvate + H2O. It functions in the pathway carbohydrate degradation; glycolysis; pyruvate from D-glyceraldehyde 3-phosphate: step 4/5. Functionally, catalyzes the reversible conversion of 2-phosphoglycerate (2-PG) into phosphoenolpyruvate (PEP). It is essential for the degradation of carbohydrates via glycolysis. The protein is Enolase of Cutibacterium acnes (strain DSM 16379 / KPA171202) (Propionibacterium acnes).